A 264-amino-acid chain; its full sequence is Type III pantothenate kinase (264 aa).

6–13 (DVRNTSIE) is a binding site for ATP. 109–112 (GADR) contacts substrate. The active-site Proton acceptor is the Asp111. Residue Asp131 coordinates K(+). Residue Thr134 coordinates ATP. Thr185 lines the substrate pocket.

This sequence belongs to the type III pantothenate kinase family. As to quaternary structure, homodimer. Requires NH4(+) as cofactor. K(+) is required as a cofactor.

It is found in the cytoplasm. It carries out the reaction (R)-pantothenate + ATP = (R)-4'-phosphopantothenate + ADP + H(+). Its pathway is cofactor biosynthesis; coenzyme A biosynthesis; CoA from (R)-pantothenate: step 1/5. Its function is as follows. Catalyzes the phosphorylation of pantothenate (Pan), the first step in CoA biosynthesis. The sequence is that of Type III pantothenate kinase from Nocardia farcinica (strain IFM 10152).